The primary structure comprises 207 residues: Probable GTP-binding protein EngB (207 aa).

Residues Ala23–Ala197 enclose the EngB-type G domain. GTP contacts are provided by residues Gly31–Ser38, Gly58–Leu62, Asp76–Gly79, Thr143–Asp146, and Phe176–Ser178. Positions 38 and 60 each coordinate Mg(2+).

Belongs to the TRAFAC class TrmE-Era-EngA-EngB-Septin-like GTPase superfamily. EngB GTPase family. Mg(2+) serves as cofactor.

In terms of biological role, necessary for normal cell division and for the maintenance of normal septation. The sequence is that of Probable GTP-binding protein EngB from Methylobacillus flagellatus (strain ATCC 51484 / DSM 6875 / VKM B-1610 / KT).